The sequence spans 308 residues: Ornithine carbamoyltransferase (308 aa).

Carbamoyl phosphate is bound by residues 52–55, glutamine 79, arginine 103, and 130–133; these read STRT and HPLQ. L-ornithine is bound by residues asparagine 162, aspartate 224, and 228–229; that span reads SM. Carbamoyl phosphate is bound by residues 264–265 and arginine 292; that span reads CL.

Belongs to the aspartate/ornithine carbamoyltransferase superfamily. OTCase family.

It localises to the cytoplasm. The catalysed reaction is carbamoyl phosphate + L-ornithine = L-citrulline + phosphate + H(+). Its pathway is amino-acid biosynthesis; L-arginine biosynthesis; L-arginine from L-ornithine and carbamoyl phosphate: step 1/3. Functionally, reversibly catalyzes the transfer of the carbamoyl group from carbamoyl phosphate (CP) to the N(epsilon) atom of ornithine (ORN) to produce L-citrulline. This is Ornithine carbamoyltransferase from Pyrobaculum calidifontis (strain DSM 21063 / JCM 11548 / VA1).